The chain runs to 241 residues: MSMLFYTLITVFLIGIQAEPYSDSNVLSGDTIPQAHWTKLQHSLDTALRRAHSAPAAPIAARVAGQTLNITVDPRLFKKRRLHSPRVLFSTQPPPLSTDAQDLDFEVDGAASVNRTHRSKRSSTHPVFHMGEFSVCDSVSVWVADKTTATDIKGKEVTVLAEVNVNNNVFKQYFFETKCRDPSPVDSGCRGIDSKHWNSYCTTTHTFVKALTTANKQAAWRFIRIDTACVCVLNRKAARRG.

The first 18 residues, M1–A18, serve as a signal peptide directing secretion. The propeptide occupies E19–R121. 2 N-linked (GlcNAc...) asparagine glycosylation sites follow: N69 and N114. Intrachain disulfides connect C136–C201, C179–C229, and C189–C231.

The protein belongs to the NGF-beta family. As to quaternary structure, homodimer. The homodimer interacts with a single NTRK1 chain. The homodimer interacts with a single NGFR chain. The NGF dimer interacts with a single SORCS2 chain (via extracellular domain). The NGF precursor (proNGF) binds to a receptor complex formed by SORT1 and NGFR, which leads to NGF endocytosis. Both mature NGF and the immature NGF precursor (proNGF) interact with SORCS2 and with the heterodimer formed by SORCS2 and NGFR (via extracellular domains). The NGF precursor (proNGF) has much higher affinity for SORCS2 than mature NGF. The NGF precursor (proNGF) has much higher affinity for SORT1 than mature NGF. Interacts with ADAM10 in a divalent cation-dependent manner. Interacts with SORCS3.

Its subcellular location is the secreted. It localises to the endosome lumen. In terms of biological role, nerve growth factor is important for the development and maintenance of the sympathetic and sensory nervous systems. Extracellular ligand for the NTRK1 and NGFR receptors, activates cellular signaling cascades through those receptor tyrosine kinase to regulate neuronal proliferation, differentiation and survival. Inhibits metalloproteinase dependent proteolysis of platelet glycoprotein VI. The protein is Beta-nerve growth factor (NGF) of Cavia porcellus (Guinea pig).